Reading from the N-terminus, the 372-residue chain is Protein phosphatase Mn(2+)-dependent 1K (372 aa).

Residues 1–29 (MLSTAFITLVRSGRNQVKKRVLLSSILLQ) constitute a mitochondrion transit peptide. A critical for association with the BCKDH complex region spans residues 46–61 (RCSRFDPDGSGQPATW). In terms of domain architecture, PPM-type phosphatase spans 94–346 (NVGCASLIGK…DNSTAVVVPF (253 aa)). Mn(2+)-binding residues include aspartate 127 and glycine 128. At serine 248 the chain carries Phosphoserine. Aspartate 298 and aspartate 337 together coordinate Mn(2+).

It belongs to the PP2C family. Interacts with E1 and E2 components of the branched-chain alpha-ketoacid dehydrogenase (BCKDH) complex. Interacts with both BCKDHA and BCKDHB chains of the E1 subunit. Interacts with the 24-meric DBT/E2 core of the BCKD complex with a 1:1 stoichiometry; the N-terminal region (residues 49-61) of PPM1K and C-terminal linker of the lipoyl domain of DBT/E2 (residues 145-160) are critical for this interaction whereas the lipoyl prosthetic group is dispensable. Competes with BCKDK for binding to DBT/E2; this interaction is modulated by branched-chain alpha-keto acids (BCKAs). At steady state, BCKDH holoenzyme preferentially binds BCKDK and BCKDHA/E1 is phosphorylated. In response to high levels of BCKAs, BCKDK is replaced by PPM1K leading to BCKDHA/E1 dephosphorylation. The cofactor is Mn(2+).

The protein localises to the mitochondrion matrix. The catalysed reaction is O-phospho-L-seryl-[3-methyl-2-oxobutanoate dehydrogenase] + H2O = L-seryl-[3-methyl-2-oxobutanoate dehydrogenase] + phosphate. It carries out the reaction O-phospho-L-seryl-[protein] + H2O = L-seryl-[protein] + phosphate. It functions in the pathway protein modification. In terms of biological role, serine/threonine-protein phosphatase component of macronutrients metabolism. Together with BCKDK serves as a metabolic regulatory node that coordinates branched-chain amino acids (BCAAs) and protein synthesis with glucose and lipid metabolism via two distinct phosphoprotein targets: BCKDHA/E1a subunit of the branched-chain alpha-ketoacid dehydrogenase (BCKDH) complex and ACLY, a lipogenic enzyme of Krebs cycle. At high levels of branched-chain ketoacids (BCKAs), dephosphorylates and activates mitochondrial BCKDH complex, a multisubunit complex consisting of three components, heterotetrameric E1 composed of BCKDHA and BCKDHB chains, 24-meric E2 core composed of DBT and homodimeric E3 composed of DLD, each involved in different steps of BCAA catabolism. Tightly associates with the E2 subunit of BCKDH complex and dephosphorylates Ser-333 of BCKDHA chain of the E1 subunit likely through on-off binding to individual E2 subunits of the 24-meric E2 core to increase the efficiency of the dephosphorylation reaction. Appears to dephosphorylate and inactivate cytosolic ACLY in response to changes of cellular carbohydrate abundance. Overnutrition and in particular high-fructose diet, activates MLXIPL/ChREBP leading to increased BCKDK to PPM1K ratio, phosphorylation of ACLY on Ser-454 and activation of its enzymatic activity that ultimately results in the generation of acetyl-CoA and malonyl-CoA immediate substrates of de novo lipogenesis. Recognizes phosphosites having SxS or RxxS motifs and strictly depends on Mn(2+) ions for the phosphatase activity. Regulates Ca(2+)-induced opening of mitochondrial transition pore and apoptotic cell death. The polypeptide is Protein phosphatase Mn(2+)-dependent 1K (Ppm1k) (Rattus norvegicus (Rat)).